The primary structure comprises 157 residues: SsrA-binding protein (157 aa).

The disordered stretch occupies residues 131 to 157; sequence KQLHDKRESVKQRDWQRDKARLMRDKG. The span at 132–157 shows a compositional bias: basic and acidic residues; sequence QLHDKRESVKQRDWQRDKARLMRDKG.

It belongs to the SmpB family.

Its subcellular location is the cytoplasm. Functionally, required for rescue of stalled ribosomes mediated by trans-translation. Binds to transfer-messenger RNA (tmRNA), required for stable association of tmRNA with ribosomes. tmRNA and SmpB together mimic tRNA shape, replacing the anticodon stem-loop with SmpB. tmRNA is encoded by the ssrA gene; the 2 termini fold to resemble tRNA(Ala) and it encodes a 'tag peptide', a short internal open reading frame. During trans-translation Ala-aminoacylated tmRNA acts like a tRNA, entering the A-site of stalled ribosomes, displacing the stalled mRNA. The ribosome then switches to translate the ORF on the tmRNA; the nascent peptide is terminated with the 'tag peptide' encoded by the tmRNA and targeted for degradation. The ribosome is freed to recommence translation, which seems to be the essential function of trans-translation. This is SsrA-binding protein from Methylorubrum populi (strain ATCC BAA-705 / NCIMB 13946 / BJ001) (Methylobacterium populi).